A 626-amino-acid chain; its full sequence is Endo-1,3(4)-beta-glucanase xgeA (626 aa).

The first 25 residues, Met-1–Ala-25, serve as a signal peptide directing secretion. Residues Glu-33–Gly-286 form the GH16 domain. Asn-61 carries an N-linked (GlcNAc...) asparagine glycan. Glu-142 acts as the Nucleophile in catalysis. Catalysis depends on Glu-147, which acts as the Proton donor. Residues Ala-477–Ser-494 show a composition bias toward low complexity. A disordered region spans residues Ala-477–Val-533. Over residues Asn-495 to Val-533 the composition is skewed to polar residues. Gly-603 carries the GPI-anchor amidated glycine lipid modification. The propeptide at Val-604–Asn-626 is removed in mature form.

It belongs to the glycosyl hydrolase 16 family.

The protein localises to the cell membrane. The catalysed reaction is Endohydrolysis of (1-&gt;3)- or (1-&gt;4)-linkages in beta-D-glucans when the glucose residue whose reducing group is involved in the linkage to be hydrolyzed is itself substituted at C-3.. Functionally, mixed-linked glucanase involved in the degradation of complex natural cellulosic substrates. Active on laminarin. lichenan, soluble carboxymethyl cellulose but not on pustulan. In Emericella nidulans (strain FGSC A4 / ATCC 38163 / CBS 112.46 / NRRL 194 / M139) (Aspergillus nidulans), this protein is Endo-1,3(4)-beta-glucanase xgeA (xgeA).